The sequence spans 351 residues: Methylthioribose-1-phosphate isomerase (351 aa).

Substrate-binding positions include 51-53 (RGA), Arg-94, and Gln-199. Residue Asp-240 is the Proton donor of the active site. 250–251 (NK) contributes to the substrate binding site.

This sequence belongs to the EIF-2B alpha/beta/delta subunits family. MtnA subfamily. As to quaternary structure, homodimer.

The catalysed reaction is 5-(methylsulfanyl)-alpha-D-ribose 1-phosphate = 5-(methylsulfanyl)-D-ribulose 1-phosphate. It participates in amino-acid biosynthesis; L-methionine biosynthesis via salvage pathway; L-methionine from S-methyl-5-thio-alpha-D-ribose 1-phosphate: step 1/6. Catalyzes the interconversion of methylthioribose-1-phosphate (MTR-1-P) into methylthioribulose-1-phosphate (MTRu-1-P). In Bacillus thuringiensis subsp. konkukian (strain 97-27), this protein is Methylthioribose-1-phosphate isomerase.